Consider the following 405-residue polypeptide: Replication factor C large subunit (405 aa).

47–54 (GPPGVGKT) is an ATP binding site.

This sequence belongs to the activator 1 small subunits family. RfcL subfamily. In terms of assembly, heteromultimer composed of small subunits (RfcS) and large subunits (RfcL).

Part of the RFC clamp loader complex which loads the PCNA sliding clamp onto DNA. The chain is Replication factor C large subunit from Saccharolobus islandicus (strain M.16.27) (Sulfolobus islandicus).